Here is a 1093-residue protein sequence, read N- to C-terminus: Probable cellulose synthase A catalytic subunit 3 [UDP-forming] (1093 aa).

Over 1 to 280 (MEASAGLVAG…PSSQINPYRM (280 aa)) the chain is Cytoplasmic. Positions 39, 42, 58, 61, 66, 69, 81, and 84 each coordinate Zn(2+). Residues 39 to 85 (CQICGDDVGLNPDGEPFVACNECAFPVCRDCYEYERREGTQNCPQCK) form an RING-type; degenerate zinc finger. The span at 233-246 (LHQMRNDGGGKDWD) shows a compositional bias: basic and acidic residues. The interval 233 to 257 (LHQMRNDGGGKDWDGDGDDGDLPLM) is disordered. Residues 281-301 (VIIIRLVVLGFFFHYRVMHPV) traverse the membrane as a helical segment. At 302-303 (PD) the chain is on the extracellular side. The helical transmembrane segment at 304 to 324 (AFALWLISVICEIWFAMSWIL) threads the bilayer. At 325–869 (DQFPKWFPIE…CLERFSYINS (545 aa)) the chain is on the cytoplasmic side. UDP-alpha-D-glucose is bound by residues Ser363, Lys369, Glu370, and Asp399. Residue Asp399 is part of the active site. Residues 453–480 (VRERRAMKREYEEFKVRINALVAKAQKV) adopt a coiled-coil conformation. Lys540 contacts UDP-alpha-D-glucose. Lys541 and Asp565 together coordinate Mn(2+). The active site involves Asp793. The chain crosses the membrane as a helical span at residues 870-890 (IVYPFTSIPLLAYCTLPAICL). Residues 891–902 (LTGKFITPELTN) are Extracellular-facing. Residues 903 to 923 (VASLWFMSLFICIFATGILEM) form a helical membrane-spanning segment. Residues 924-939 (RWSGVGIDDWWRNEQF) are Cytoplasmic-facing. A helical transmembrane segment spans residues 940-960 (WVIGGVSSHLFALFQGLLKVI). Residues 961–988 (AGIDTSFTVTSKGGDDEEFSELYTFKWT) are Extracellular-facing. The chain crosses the membrane as a helical span at residues 989–1009 (TLLIPPTTLLLLNFIGVVAGV). Residues 1010–1020 (SNAINNGYESW) lie on the Cytoplasmic side of the membrane. The helical transmembrane segment at 1021–1041 (GPLFGKLFFAFWVIVHLYPFL) threads the bilayer. At 1042 to 1050 (KGLVGRQNR) the chain is on the extracellular side. The chain crosses the membrane as a helical span at residues 1051–1071 (TPTIVIVWSILLASIFSLLWV). The Cytoplasmic portion of the chain corresponds to 1072-1093 (RIDPFLAKNDGPLLEECGLDCN).

This sequence belongs to the glycosyltransferase 2 family. Plant cellulose synthase subfamily. Requires Mn(2+) as cofactor. Zn(2+) is required as a cofactor.

It localises to the cell membrane. It carries out the reaction [(1-&gt;4)-beta-D-glucosyl](n) + UDP-alpha-D-glucose = [(1-&gt;4)-beta-D-glucosyl](n+1) + UDP + H(+). The protein operates within glycan metabolism; plant cellulose biosynthesis. Probable catalytic subunit of cellulose synthase terminal complexes ('rosettes'), required for beta-1,4-glucan microfibril crystallization, a major mechanism of the cell wall formation. In Oryza sativa subsp. japonica (Rice), this protein is Probable cellulose synthase A catalytic subunit 3 [UDP-forming] (CESA3).